The following is a 134-amino-acid chain: Large ribosomal subunit protein bL20 (134 aa).

The protein belongs to the bacterial ribosomal protein bL20 family.

In terms of biological role, binds directly to 23S ribosomal RNA and is necessary for the in vitro assembly process of the 50S ribosomal subunit. It is not involved in the protein synthesizing functions of that subunit. This Brucella anthropi (strain ATCC 49188 / DSM 6882 / CCUG 24695 / JCM 21032 / LMG 3331 / NBRC 15819 / NCTC 12168 / Alc 37) (Ochrobactrum anthropi) protein is Large ribosomal subunit protein bL20.